The following is a 209-amino-acid chain: Probable glutathione peroxidase 8 (209 aa).

Met1 carries the N-acetylmethionine modification. The chain crosses the membrane as a helical span at residues 18–40 (VFAVLLSIVLCTVTLFLLQLKFL). Residue Cys79 is part of the active site.

This sequence belongs to the glutathione peroxidase family.

It is found in the membrane. It carries out the reaction 2 glutathione + H2O2 = glutathione disulfide + 2 H2O. The polypeptide is Probable glutathione peroxidase 8 (GPX8) (Homo sapiens (Human)).